We begin with the raw amino-acid sequence, 155 residues long: Ribosome maturation factor RimP (155 aa).

Belongs to the RimP family.

The protein localises to the cytoplasm. Its function is as follows. Required for maturation of 30S ribosomal subunits. This Prochlorococcus marinus (strain MIT 9515) protein is Ribosome maturation factor RimP.